Reading from the N-terminus, the 218-residue chain is uncharacterized protein (218 aa).

The first 21 residues, 1–21 (MKKFVYKYSFGALLLLSGLSS), serve as a signal peptide directing secretion. Cys22 carries the N-palmitoyl cysteine lipid modification. Cys22 carries the S-diacylglycerol cysteine lipid modification.

Belongs to the chlamydial CPn_0875/CT_734/TC_0107 family.

It is found in the cell membrane. This is an uncharacterized protein from Chlamydia muridarum (strain MoPn / Nigg).